A 134-amino-acid chain; its full sequence is Ribosome-binding factor A (134 aa).

Belongs to the RbfA family. Monomer. Binds 30S ribosomal subunits, but not 50S ribosomal subunits or 70S ribosomes.

It localises to the cytoplasm. Functionally, one of several proteins that assist in the late maturation steps of the functional core of the 30S ribosomal subunit. Associates with free 30S ribosomal subunits (but not with 30S subunits that are part of 70S ribosomes or polysomes). Required for efficient processing of 16S rRNA. May interact with the 5'-terminal helix region of 16S rRNA. The protein is Ribosome-binding factor A of Baumannia cicadellinicola subsp. Homalodisca coagulata.